The chain runs to 182 residues: MAARLRTKYKKEIVPELNKKFKFSSIMQVPRLEKIVLNVGMGEAHTNPKALEAAVEELALITGQRPVKTKAKKSIAGFKIREGMSLGCMVTLRGDYMYEFLDRLVNVALPRVRDFKGVSEKGFDGRGNYNMSIKEQIIFPEIKVDKINTLYGINMTFVTNSKSNEEAYSLLAAFGMPYRNQK.

This sequence belongs to the universal ribosomal protein uL5 family. Part of the 50S ribosomal subunit; part of the 5S rRNA/L5/L18/L25 subcomplex. Contacts the 5S rRNA and the P site tRNA. Forms a bridge to the 30S subunit in the 70S ribosome.

In terms of biological role, this is one of the proteins that bind and probably mediate the attachment of the 5S RNA into the large ribosomal subunit, where it forms part of the central protuberance. In the 70S ribosome it contacts protein S13 of the 30S subunit (bridge B1b), connecting the 2 subunits; this bridge is implicated in subunit movement. Contacts the P site tRNA; the 5S rRNA and some of its associated proteins might help stabilize positioning of ribosome-bound tRNAs. This is Large ribosomal subunit protein uL5 from Leptospira interrogans serogroup Icterohaemorrhagiae serovar copenhageni (strain Fiocruz L1-130).